Reading from the N-terminus, the 215-residue chain is Probable GTP-binding protein EngB (215 aa).

The EngB-type G domain occupies 26-200 (EGIEVAFAGR…RAKLDEWFAP (175 aa)). GTP contacts are provided by residues 34–41 (GRSNAGKS), 61–65 (GRTQL), 79–82 (DLPG), 146–149 (TKAD), and 179–181 (FSS). Residues Ser-41 and Thr-63 each contribute to the Mg(2+) site.

The protein belongs to the TRAFAC class TrmE-Era-EngA-EngB-Septin-like GTPase superfamily. EngB GTPase family. The cofactor is Mg(2+).

In terms of biological role, necessary for normal cell division and for the maintenance of normal septation. In Aliivibrio fischeri (strain MJ11) (Vibrio fischeri), this protein is Probable GTP-binding protein EngB.